Here is a 514-residue protein sequence, read N- to C-terminus: Monocarboxylate transporter 10 (514 aa).

Positions 1 to 64 are disordered; it reads MVPSQEEPAA…TGNQEPPEPP (64 aa). At 1-65 the chain is on the cytoplasmic side; that stretch reads MVPSQEEPAA…GNQEPPEPPE (65 aa). The helical transmembrane segment at 66–86 threads the bilayer; the sequence is GGWGWLVMLAAMWCNGSVFGI. Residues 87-113 are Extracellular-facing; it reads QNAYGVLFVSMLETFGAKDDDNMAFKA. The helical transmembrane segment at 114 to 134 threads the bilayer; that stretch reads AWVGSLSMGMIFFCCPIVSVF. The Cytoplasmic segment spans residues 135–143; sequence TDMFGCRRT. The chain crosses the membrane as a helical span at residues 144–164; sequence AVLGAAVGFVGLMSSSFVSSI. Residues 165 to 170 are Extracellular-facing; that stretch reads EPLYFT. The chain crosses the membrane as a helical span at residues 171-191; that stretch reads YGVVFACGCSFAYQPSLVILG. The Cytoplasmic portion of the chain corresponds to 192-199; the sequence is HYFKKRLG. Residues 200-220 form a helical membrane-spanning segment; it reads LVNGIVTAGSSVFTILLPLLL. Residues 221 to 227 lie on the Extracellular side of the membrane; sequence GNLTSTV. Residues 228–248 form a helical membrane-spanning segment; it reads GLCYTLRILCIFMFVLFLAGF. Residues 249 to 290 are Cytoplasmic-facing; the sequence is TYRPLVPSSKEKESEDSRSSFFSRRKLSPPKKIFNFALFKET. At serine 262 the chain carries Phosphoserine. Residues 291–311 form a helical membrane-spanning segment; sequence AYAVWAAGIPLALFGYFVPYV. Residues 312-328 are Extracellular-facing; the sequence is HLMNHVKERFKDVNNKE. A helical transmembrane segment spans residues 329-349; the sequence is VLFMCIGVTSGVGRLLFGRIA. Residue aspartate 350 is a topological domain, cytoplasmic. A helical membrane pass occupies residues 351–371; sequence YLPGVKKVYLQVLSFFFIGLT. Topologically, residues 372–395 are extracellular; the sequence is SMMIPLCSVFGALIALCLIMGLFD. Residues 396 to 416 form a helical membrane-spanning segment; the sequence is GCFISIMAPIAFELVGPQDAS. The Cytoplasmic segment spans residues 417-418; that stretch reads QA. Residues 419 to 439 form a helical membrane-spanning segment; that stretch reads IGFLLGFMSIPMTVGPPVAGL. The Extracellular segment spans residues 440–450; that stretch reads LHDKLGSYDLA. A helical membrane pass occupies residues 451 to 471; that stretch reads FYLAGIPPFIGGAVLCLIPWI. The Cytoplasmic segment spans residues 472–514; that stretch reads HSKKQREISKNTGGEKMEKMLANQSSLLSSSSGIFKKESDSII. Phosphoserine occurs at positions 497, 500, 502, and 503.

Belongs to the major facilitator superfamily. Monocarboxylate porter (TC 2.A.1.13) family. Post-translationally, not N-glycosylated. As to expression, strongly expressed in intestine, placenta and liver. In small intestine is detected in the basolateral membrane (at protein level).

It localises to the cell membrane. The protein localises to the basolateral cell membrane. The enzyme catalyses L-tryptophan(in) = L-tryptophan(out). It catalyses the reaction L-tyrosine(in) = L-tyrosine(out). The catalysed reaction is L-phenylalanine(in) = L-phenylalanine(out). It carries out the reaction 3,3',5-triiodo-L-thyronine(out) = 3,3',5-triiodo-L-thyronine(in). The enzyme catalyses L-thyroxine(out) = L-thyroxine(in). Its function is as follows. Sodium- and proton-independent thyroid hormones and aromatic acids transporter. Mediates both uptake and efflux of 3,5,3'-triiodothyronine (T3) and 3,5,3',5'-tetraiodothyronine (T4) with high affinity, suggesting a role in the homeostasis of thyroid hormone levels. Responsible for low affinity bidirectional transport of the aromatic amino acids, such as phenylalanine, tyrosine, tryptophan and L-3,4-dihydroxyphenylalanine (L-dopa). Plays an important role in homeostasis of aromatic amino acids. The polypeptide is Monocarboxylate transporter 10 (Slc16a10) (Rattus norvegicus (Rat)).